A 303-amino-acid polypeptide reads, in one-letter code: Coenzyme PQQ synthesis protein B (303 aa).

This sequence belongs to the PqqB family.

The protein operates within cofactor biosynthesis; pyrroloquinoline quinone biosynthesis. Functionally, may be involved in the transport of PQQ or its precursor to the periplasm. This is Coenzyme PQQ synthesis protein B from Acinetobacter baumannii (strain AB0057).